Reading from the N-terminus, the 191-residue chain is Elongation factor P-like protein (191 aa).

This sequence belongs to the elongation factor P family.

This chain is Elongation factor P-like protein, found in Shewanella sediminis (strain HAW-EB3).